The sequence spans 465 residues: MGKRGRACVVVLGDLGRSPRMQYHALSLARQASFQVDIVAYGGSIPHEAVLNHPSIHIHTMAQPRFIQYFPKILYPVTLLLKAFIQFTMLLWFLFVKVPAPDIFLVQNPPSVPTLIAVKWASSWRRAAFVVDWHNFGYTLLALSLGRNNLLVSLYRWSENHYGKMATGSLCVTKAMQHELDQNWGVRAKVLYDQPPEFFRPALLEERHELFCRVRKDLCHPIGVYDFISRELENQELNETLFTTKFNADISLKQNRPALVVSSTSWTPDENFGILLEAAVMYDRRVAARSKGSETAEISEEQHHYPNLLFIITGKGPEKEMYEEKIKRLNLRHVAFRTMWLAAEDYPLLLGSADLGVCLHTSSSGLDLPMKVVDMFGCGLPVCSVSYSCIQELVKDGKNGLLFSSSSELADQLLILFKGFPGNCDALMSLKAGAMETGSSGRWATEWEDCAKPLITQVVSQIADS.

The Cytoplasmic segment spans residues 1-75 (MGKRGRACVV…FIQYFPKILY (75 aa)). A helical transmembrane segment spans residues 76 to 96 (PVTLLLKAFIQFTMLLWFLFV). The Lumenal segment spans residues 97–465 (KVPAPDIFLV…TQVVSQIADS (369 aa)). N-linked (GlcNAc...) asparagine glycosylation occurs at asparagine 238.

The protein belongs to the glycosyltransferase group 1 family. Glycosyltransferase 33 subfamily.

It is found in the endoplasmic reticulum membrane. It functions in the pathway protein modification; protein glycosylation. Required for pollen tube (PT) growth and integrity by affecting the stability of the pollen-specific ANX1 and ANX2 proteins. Involved in protein N-glycosylation in the endoplasmic reticulum (ER), especially in the female gametophyte. Mediates PT reception in synergids through protein glycosylation. The polypeptide is UDP-glycosyltransferase TURAN (Arabidopsis thaliana (Mouse-ear cress)).